The sequence spans 50 residues: MDSISVPLQFCLMRVQEAVPGKPHFSVERLLIRVTYSDERISHPIGNPEA.

This is an uncharacterized protein from Dictyostelium discoideum (Social amoeba).